The primary structure comprises 284 residues: Formyltetrahydrofolate deformylase (284 aa).

One can recognise an ACT domain in the interval 7 to 90; that stretch reads TLLVSCPDQP…QIHFSDQLPR (84 aa). Residue Asp228 is part of the active site.

The protein belongs to the PurU family.

It carries out the reaction (6R)-10-formyltetrahydrofolate + H2O = (6S)-5,6,7,8-tetrahydrofolate + formate + H(+). The protein operates within purine metabolism; IMP biosynthesis via de novo pathway; formate from 10-formyl-5,6,7,8-tetrahydrofolate: step 1/1. In terms of biological role, catalyzes the hydrolysis of 10-formyltetrahydrofolate (formyl-FH4) to formate and tetrahydrofolate (FH4). This is Formyltetrahydrofolate deformylase from Synechocystis sp. (strain ATCC 27184 / PCC 6803 / Kazusa).